The chain runs to 341 residues: tRNA N6-adenosine threonylcarbamoyltransferase (341 aa).

Fe cation contacts are provided by His118 and His122. Substrate contacts are provided by residues 141–145 (LVSGG), Asp174, Gly187, and Asn281. Asp309 provides a ligand contact to Fe cation.

It belongs to the KAE1 / TsaD family. Fe(2+) serves as cofactor.

It localises to the cytoplasm. The enzyme catalyses L-threonylcarbamoyladenylate + adenosine(37) in tRNA = N(6)-L-threonylcarbamoyladenosine(37) in tRNA + AMP + H(+). Its function is as follows. Required for the formation of a threonylcarbamoyl group on adenosine at position 37 (t(6)A37) in tRNAs that read codons beginning with adenine. Is involved in the transfer of the threonylcarbamoyl moiety of threonylcarbamoyl-AMP (TC-AMP) to the N6 group of A37, together with TsaE and TsaB. TsaD likely plays a direct catalytic role in this reaction. This chain is tRNA N6-adenosine threonylcarbamoyltransferase, found in Desulfitobacterium hafniense (strain Y51).